The sequence spans 545 residues: MKTNYIFVTGGVVSSLGKGIAAASLAAILEARGLNVTMMKLDPYINVDPGTMSPIQHGEVFVTDDGAETDLDLGHYERFIRTKMTRRNNFTTGRVYSEVLRKERRGDYLGATIQVIPHITNEIKERIIRGGEGHDVVLVEVGGTVGDIESLPFLEAIRQMAAEVGREHTFYLHLTLVPYLAASGEVKTKPTQHSVKELLSIGIQPDALICRSDRVIPANERAKIALFCNVPEKAVISLKDVDSIYKIPALLKSQGLDDYICKRFSLDCPVANLSEWEQVIYEEANPEGEVTIGMVGKYVELPDAYKSVIEALKHGGFKSRVAVNIKLIDSQDVETRGVEILKGLDAILVPGGFGERGVEGKIMAARYARENKIPYLGICLGMQVAMIEFARNVANMEDANSTEFAPDCKYPVIALITEWRDENGNLEVRTENSDLGGTMRLGAQPCHLSGDSLVRTLYGKNTITERHRHRYEVNNLLLKRIEDAGLRIAGRSVDNKLVEIIENPNHPWFVACQFHPEFTSTPRDGHPLFAGFVKAAFDYQKGLLK.

An amidoligase domain region spans residues 1 to 266; sequence MKTNYIFVTG…DDYICKRFSL (266 aa). S14 contributes to the CTP binding site. S14 serves as a coordination point for UTP. Residues 15-20 and D72 contribute to the ATP site; that span reads SLGKGI. Mg(2+) is bound by residues D72 and E140. Residues 147-149, 187-192, and K223 each bind CTP; these read DIE and KTKPTQ. UTP contacts are provided by residues 187-192 and K223; that span reads KTKPTQ. ATP is bound at residue 239-241; the sequence is KDV. A Glutamine amidotransferase type-1 domain is found at 291–542; it reads TIGMVGKYVE…VKAAFDYQKG (252 aa). G352 provides a ligand contact to L-glutamine. Catalysis depends on C379, which acts as the Nucleophile; for glutamine hydrolysis. Residues 380–383, E403, and R470 contribute to the L-glutamine site; that span reads LGMQ. Residues H515 and E517 contribute to the active site.

Belongs to the CTP synthase family. As to quaternary structure, homotetramer.

The enzyme catalyses UTP + L-glutamine + ATP + H2O = CTP + L-glutamate + ADP + phosphate + 2 H(+). It catalyses the reaction L-glutamine + H2O = L-glutamate + NH4(+). It carries out the reaction UTP + NH4(+) + ATP = CTP + ADP + phosphate + 2 H(+). The protein operates within pyrimidine metabolism; CTP biosynthesis via de novo pathway; CTP from UDP: step 2/2. With respect to regulation, allosterically activated by GTP, when glutamine is the substrate; GTP has no effect on the reaction when ammonia is the substrate. The allosteric effector GTP functions by stabilizing the protein conformation that binds the tetrahedral intermediate(s) formed during glutamine hydrolysis. Inhibited by the product CTP, via allosteric rather than competitive inhibition. Functionally, catalyzes the ATP-dependent amination of UTP to CTP with either L-glutamine or ammonia as the source of nitrogen. Regulates intracellular CTP levels through interactions with the four ribonucleotide triphosphates. This Proteus mirabilis (strain HI4320) protein is CTP synthase.